The primary structure comprises 97 residues: Co-chaperonin GroES (97 aa).

Belongs to the GroES chaperonin family. In terms of assembly, heptamer of 7 subunits arranged in a ring. Interacts with the chaperonin GroEL.

It localises to the cytoplasm. Functionally, together with the chaperonin GroEL, plays an essential role in assisting protein folding. The GroEL-GroES system forms a nano-cage that allows encapsulation of the non-native substrate proteins and provides a physical environment optimized to promote and accelerate protein folding. GroES binds to the apical surface of the GroEL ring, thereby capping the opening of the GroEL channel. The chain is Co-chaperonin GroES from Buchnera aphidicola subsp. Thelaxes suberi.